The primary structure comprises 450 residues: MTAHKPFSAVILAAGKGTRMRSDTHKILHALAGRPLLGWVLDSLAPLSPDHTVVVTGSGREQVENYLKQVDLPVTSVTQEEQLGTAHAVAQAKSALKDFKGDIVVLYGDVPLVQPKTIKALLERLHHEDKPTVAVLAFRPDDPRQYGRIVTDKTAHIQKMVEYKDASEEERAITLCNSGLLAIRAHDLWPLLSRVQNNNASGEYYLPDIVMLALSEGRQAVTVDAEAWEVSGVNNRAELASLESLWQNRKRQDVMKDGASLIAPETVWFSYDTEIGRDVIIEPQVYFGRNVKVANGVTIHSFSHIEGADIKENVEIGPFARLRPGAEIAEKAKIGNFVEIKKSKIEKGAKVNHLTYIGDATIGAGSNIGGGTITCNYDGFNKSRTEIGEKAFIGSNSALVAPVRIGAGAIIAAGSTITHNVPDDSLAIARSEQENKALWAKKFRQRKKKK.

Residues 1–236 (MTAHKPFSAV…AWEVSGVNNR (236 aa)) form a pyrophosphorylase region. UDP-N-acetyl-alpha-D-glucosamine-binding positions include 12–15 (LAAG), Lys26, Gln79, 84–85 (GT), 107–109 (YGD), Gly147, Glu162, Asn177, and Asn234. Asp109 serves as a coordination point for Mg(2+). Asn234 is a binding site for Mg(2+). The segment at 237–257 (AELASLESLWQNRKRQDVMKD) is linker. The interval 258–450 (GASLIAPETV…KKFRQRKKKK (193 aa)) is N-acetyltransferase. UDP-N-acetyl-alpha-D-glucosamine contacts are provided by Arg323 and Lys341. His353 (proton acceptor) is an active-site residue. UDP-N-acetyl-alpha-D-glucosamine contacts are provided by Tyr356 and Asn367. Acetyl-CoA is bound by residues 376–377 (NY), Ser395, Ala413, and Arg430.

In the N-terminal section; belongs to the N-acetylglucosamine-1-phosphate uridyltransferase family. The protein in the C-terminal section; belongs to the transferase hexapeptide repeat family. In terms of assembly, homotrimer. The cofactor is Mg(2+).

It localises to the cytoplasm. The enzyme catalyses alpha-D-glucosamine 1-phosphate + acetyl-CoA = N-acetyl-alpha-D-glucosamine 1-phosphate + CoA + H(+). It catalyses the reaction N-acetyl-alpha-D-glucosamine 1-phosphate + UTP + H(+) = UDP-N-acetyl-alpha-D-glucosamine + diphosphate. The protein operates within nucleotide-sugar biosynthesis; UDP-N-acetyl-alpha-D-glucosamine biosynthesis; N-acetyl-alpha-D-glucosamine 1-phosphate from alpha-D-glucosamine 6-phosphate (route II): step 2/2. It functions in the pathway nucleotide-sugar biosynthesis; UDP-N-acetyl-alpha-D-glucosamine biosynthesis; UDP-N-acetyl-alpha-D-glucosamine from N-acetyl-alpha-D-glucosamine 1-phosphate: step 1/1. Its pathway is bacterial outer membrane biogenesis; LPS lipid A biosynthesis. Functionally, catalyzes the last two sequential reactions in the de novo biosynthetic pathway for UDP-N-acetylglucosamine (UDP-GlcNAc). The C-terminal domain catalyzes the transfer of acetyl group from acetyl coenzyme A to glucosamine-1-phosphate (GlcN-1-P) to produce N-acetylglucosamine-1-phosphate (GlcNAc-1-P), which is converted into UDP-GlcNAc by the transfer of uridine 5-monophosphate (from uridine 5-triphosphate), a reaction catalyzed by the N-terminal domain. This Zymomonas mobilis subsp. mobilis (strain ATCC 31821 / ZM4 / CP4) protein is Bifunctional protein GlmU.